A 565-amino-acid polypeptide reads, in one-letter code: Mitochondrial distribution and morphology protein 34 (565 aa).

An SMP-LTD domain is found at 1–208 (MAFNFNWSPL…VPEYRDRESE (208 aa)). Residues 209-220 (SVNTLDLSSESG) are compositionally biased toward polar residues. Disordered regions lie at residues 209-241 (SVNT…GNAL), 347-463 (FGSY…SRSA), and 533-565 (MQEQ…AYGH). The span at 353–367 (PGRHSRSHTKKRKKR) shows a compositional bias: basic residues. The span at 368-378 (VVDLRRPKTTD) shows a compositional bias: basic and acidic residues. Residues 382–391 (SVSGDSVFSS) show a composition bias toward low complexity. Polar residues-rich tracts occupy residues 392–402 (ENATSAPTIFS) and 439–463 (QGDQ…SRSA).

This sequence belongs to the MDM34 family. In terms of assembly, component of the ER-mitochondria encounter structure (ERMES) or MDM complex, composed of mmm1, mdm10, mdm12 and mdm34.

The protein localises to the mitochondrion outer membrane. In terms of biological role, component of the ERMES/MDM complex, which serves as a molecular tether to connect the endoplasmic reticulum (ER) and mitochondria. Components of this complex are involved in the control of mitochondrial shape and protein biogenesis, and function in nonvesicular lipid trafficking between the ER and mitochondria. Mdm34 is required for the interaction of the ER-resident membrane protein mmm1 and the outer mitochondrial membrane-resident beta-barrel protein mdm10. This is Mitochondrial distribution and morphology protein 34 from Talaromyces marneffei (strain ATCC 18224 / CBS 334.59 / QM 7333) (Penicillium marneffei).